The primary structure comprises 601 residues: NADH-quinone oxidoreductase subunit C/D (601 aa).

Residues 1 to 191 (MKLTRDFPSN…DPFMLDAAKQ (191 aa)) form an NADH dehydrogenase I subunit C region. The segment at 215–601 (DYMFLNLGPN…IDFVMSDVDR (387 aa)) is NADH dehydrogenase I subunit D.

This sequence in the N-terminal section; belongs to the complex I 30 kDa subunit family. In the C-terminal section; belongs to the complex I 49 kDa subunit family. In terms of assembly, NDH-1 is composed of 13 different subunits. Subunits NuoB, CD, E, F, and G constitute the peripheral sector of the complex.

The protein localises to the cell inner membrane. The enzyme catalyses a quinone + NADH + 5 H(+)(in) = a quinol + NAD(+) + 4 H(+)(out). Its function is as follows. NDH-1 shuttles electrons from NADH, via FMN and iron-sulfur (Fe-S) centers, to quinones in the respiratory chain. The immediate electron acceptor for the enzyme in this species is believed to be ubiquinone. Couples the redox reaction to proton translocation (for every two electrons transferred, four hydrogen ions are translocated across the cytoplasmic membrane), and thus conserves the redox energy in a proton gradient. This is NADH-quinone oxidoreductase subunit C/D from Aeromonas salmonicida (strain A449).